Reading from the N-terminus, the 228-residue chain is MKSTRPFHPTPVITIDGPTASGKGTVAALVAAHLGFHLLDSGALYRLAALASVRYGIDAQDIDALVKLIDDLHITFREGCAQLDGVDVSNDIRAEAVGNRASAIAVHGPVRVALVARQRAFRKTPGLVADGRDMGTVIFPDAVLKVFLTASAEARAARRHKQLMQKGFSANIENLLRDLRERDARDSNRAAAPLKPAADAKLLDTSALSVDQAVDQVLQWYRALGQPA.

17 to 25 (GPTASGKGT) contributes to the ATP binding site.

It belongs to the cytidylate kinase family. Type 1 subfamily.

It localises to the cytoplasm. The catalysed reaction is CMP + ATP = CDP + ADP. It carries out the reaction dCMP + ATP = dCDP + ADP. The sequence is that of Cytidylate kinase from Burkholderia vietnamiensis (strain G4 / LMG 22486) (Burkholderia cepacia (strain R1808)).